We begin with the raw amino-acid sequence, 195 residues long: Replication restart protein PriC (195 aa).

Belongs to the PriC family. Monomer. Component of the replication restart primosome, which is composed of PriA, PriB, PriC, DnaB and DnaT; DnaG primase associates transiently with this complex. Interacts with the C-terminus of SSB; this interaction is required to load the main replicative helicase onto substrate replication forks. Interacts with helicase DnaB alone and in the DnaB-DnaC complex, probably 1:1 binding with DnaB.

In terms of biological role, involved in the restart of stalled replication forks, which reloads the DnaB replicative helicase on sites other than the origin of replication. Recognizes abandoned replication forks and remodels DNA single-stranded binding protein (SSB) on ssDNA to uncover a loading site for DnaB. There are several restart pathways, the PriA-PriC pathway is a minor restart pathway. Part of the minor PriC-Rep pathway for restart of stalled replication forks, which has a different substrate specificity than PriA. Part of the major restart pathway with PriA, PriB, DnaB, DnaT and DnaG primase. priB and priC have redundant roles in the cell. The sequence is that of Replication restart protein PriC from Haemophilus influenzae (strain ATCC 51907 / DSM 11121 / KW20 / Rd).